The following is a 382-amino-acid chain: Guanine nucleotide-binding protein G(s) subunit alpha (382 aa).

The span at 1–14 shows a compositional bias: polar residues; that stretch reads MGCFGSPTSKQSDV. The segment at 1–31 is disordered; sequence MGCFGSPTSKQSDVNSEDSKSQKRRSDAISR. Gly-2 carries N-palmitoyl glycine lipidation. Cys-3 carries the S-palmitoyl cysteine lipid modification. Positions 17–31 are enriched in basic and acidic residues; sequence EDSKSQKRRSDAISR. Positions 42 to 382 constitute a G-alpha domain; sequence ATHRLLLLGA…RMHLRQYELL (341 aa). Positions 45-58 are G1 motif; it reads RLLLLGAGESGKST. GTP is bound by residues 50-57, 51-58, 186-192, 211-215, 212-216, 280-283, 281-284, and Ala-354; these read GAGESGKS, AGESGKST, LRCRVLT, DVGGQ, VGGQR, NKQD, and KQDL. Positions 57 and 192 each coordinate Mg(2+). The tract at residues 184 to 192 is G2 motif; sequence DILRCRVLT. The segment at 207–216 is G3 motif; that stretch reads FHMFDVGGQR. The tract at residues 276 to 283 is G4 motif; sequence ILFLNKQD. The G5 motif stretch occupies residues 352–357; that stretch reads TCAVDT.

It belongs to the G-alpha family. G(s) subfamily. As to quaternary structure, g proteins are composed of 3 units; alpha, beta and gamma. The alpha chain contains the guanine nucleotide binding site.

Guanine nucleotide-binding proteins (G proteins) are involved as modulators or transducers in various transmembrane signaling systems. The G(s) protein is involved in hormonal regulation of adenylate cyclase: it activates the cyclase. The sequence is that of Guanine nucleotide-binding protein G(s) subunit alpha (G-salpha60A) from Drosophila pseudoobscura pseudoobscura (Fruit fly).